Consider the following 216-residue polypeptide: MKDQVIPKATARRLPLYYRYLRMLHDTGKNKVSSTELSEAVQVDSATIRRDFSYFGELGKRGYGYDVENLMNFFAKTLNEDELTNVALIGVGNLGSALLKYKFHQSNSIRVSCAFDVNEDIVGRIVDGIPVYPMEDMMEQIRVQQIEVAILTIPARKAQEVVNKLAEAGVKGILNFTAARLVAPPEVLIQNVDLTNELQTLIYFLHHDNELIDEEE.

Residues 16-55 constitute a DNA-binding region (H-T-H motif); that stretch reads LYYRYLRMLHDTGKNKVSSTELSEAVQVDSATIRRDFSYF. Residue 90–95 participates in NAD(+) binding; it reads GVGNLG.

Belongs to the transcriptional regulatory Rex family. As to quaternary structure, homodimer.

The protein resides in the cytoplasm. Functionally, modulates transcription in response to changes in cellular NADH/NAD(+) redox state. The polypeptide is Redox-sensing transcriptional repressor Rex 1 (Enterococcus faecalis (strain ATCC 700802 / V583)).